The primary structure comprises 217 residues: Dephospho-CoA kinase (217 aa).

The 216-residue stretch at 2 to 217 folds into the DPCK domain; it reads VIGLTGGIAS…RELARIEEQK (216 aa). ATP is bound at residue 10 to 15; that stretch reads ASGKST.

Belongs to the CoaE family.

It localises to the cytoplasm. The catalysed reaction is 3'-dephospho-CoA + ATP = ADP + CoA + H(+). It functions in the pathway cofactor biosynthesis; coenzyme A biosynthesis; CoA from (R)-pantothenate: step 5/5. Catalyzes the phosphorylation of the 3'-hydroxyl group of dephosphocoenzyme A to form coenzyme A. The protein is Dephospho-CoA kinase of Lactococcus lactis subsp. lactis (strain IL1403) (Streptococcus lactis).